Reading from the N-terminus, the 837-residue chain is Putative dimethyl sulfoxide reductase catalytic subunit A (837 aa).

Residues 1–36 (MSDTDLNATRRDVLKSGAVAAVGLSGGGLLSTLQEA) constitute a signal peptide (tat-type signal). The 4Fe-4S Mo/W bis-MGD-type domain occupies 53 to 110 (DQVVKTACSPNCRGKCPLDVFVRDGQIKKVEQQVPAAKTFKRGCTLGMTHLQRVYNAD). The [4Fe-4S] cluster site is built by cysteine 60, cysteine 64, cysteine 68, and cysteine 96. Asparagine 200 serves as a coordination point for Mo-bis(molybdopterin guanine dinucleotide). The tract at residues 813–837 (EHQSNEYTQHNPRGSSGTATDGDSS) is disordered. Residues 826–837 (GSSGTATDGDSS) show a composition bias toward low complexity.

The protein belongs to the prokaryotic molybdopterin-containing oxidoreductase family. Probable multiprotein complex that likely consists of DmsA, DmsB and DmsC. Mo-bis(molybdopterin guanine dinucleotide) serves as cofactor. Requires [4Fe-4S] cluster as cofactor. Post-translationally, predicted to be exported by the Tat system. The position of the signal peptide cleavage has not been experimentally proven.

The protein resides in the cell membrane. The catalysed reaction is dimethyl sulfide + a menaquinone + H2O = dimethyl sulfoxide + a menaquinol. Functionally, dimethyl sulfoxide (DMSO) reductase catalyzes the reduction of dimethyl sulfoxide (DMSO) to dimethyl sulfide (DMS) during anaerobic respiration; it can also use trimethylamine N-oxide (TMAO) as terminal electron acceptor. Required for anaerobic respiration on DMSO and TMAO; subunit A is proposed to be catalytically active. This Halobacterium salinarum (strain ATCC 700922 / JCM 11081 / NRC-1) (Halobacterium halobium) protein is Putative dimethyl sulfoxide reductase catalytic subunit A (dmsA).